We begin with the raw amino-acid sequence, 70 residues long: Flexible pilin (70 aa).

The N-terminal stretch at 1-24 is a signal peptide; that stretch reads MPNFFRNGCIALVGSVAAMGAAHA.

As to quaternary structure, homomer.

It localises to the fimbrium. Functionally, fimbriae (also called pili) are polar filaments radiating from the surface of the bacterium to a length of 0.5-1.5 micrometers and numbering 100-300 per cell. They enable bacteria to colonize the epithelium of specific host organs. Flexible pili possess hemagglutinating function. This is Flexible pilin (aerA) from Aeromonas hydrophila.